The chain runs to 61 residues: Sec-independent protein translocase protein TatA (61 aa).

The chain crosses the membrane as a helical span at residues 1-21 (MFGIGMPELIVILVIVLVVFG).

This sequence belongs to the TatA/E family. In terms of assembly, the Tat system comprises two distinct complexes: a TatABC complex, containing multiple copies of TatA, TatB and TatC subunits, and a separate TatA complex, containing only TatA subunits. Substrates initially bind to the TatABC complex, which probably triggers association of the separate TatA complex to form the active translocon.

The protein resides in the cell inner membrane. Part of the twin-arginine translocation (Tat) system that transports large folded proteins containing a characteristic twin-arginine motif in their signal peptide across membranes. TatA could form the protein-conducting channel of the Tat system. The sequence is that of Sec-independent protein translocase protein TatA from Geobacter metallireducens (strain ATCC 53774 / DSM 7210 / GS-15).